The sequence spans 213 residues: Ras-related protein Rab-39B (213 aa).

GTP-binding residues include S17, G20, K21, S22, C23, S37, and T40. Mg(2+) is bound at residue S22. Residues 35–43 (QVSDPTVGV) form a switch-I region. The Mg(2+) site is built by T40 and D64. GTP is bound by residues G67, H123, K124, D126, A154, and R155. Residues 67-83 (GQERFRSITRAYYRNSV) form a switch-II region. S201 is modified (phosphoserine). S-geranylgeranyl cysteine attachment occurs at residues C211 and C213. C213 is modified (cysteine methyl ester).

Belongs to the small GTPase superfamily. Rab family. In terms of assembly, interacts (GDP-bound) with C9orf72; C9orf72 in complex with SMCR8 acts as a GEF for RAB39B. Interacts (in GTP-bound form) with PICK1 (via PDZ domain); a PICK1 homodimer may allow simultaneous association of RAB39B and GRIA2 to PICK1 which is involved in GRIA2 trafficking. Interacts with isoform c of RASSF1; the interaction is strong. Interacts with isoform a of RASSF1; the interaction is weak. Interacts with the DLG4/PSD-95. Interacts (GTP-bound) with HOPS complex components VPS39 and VPS41. The cofactor is Mg(2+). In terms of tissue distribution, highly expressed in the brain.

It is found in the cell membrane. It localises to the cytoplasmic vesicle membrane. Its subcellular location is the golgi apparatus. The protein resides in the cytoplasmic vesicle. The protein localises to the autophagosome membrane. It is found in the autolysosome membrane. The enzyme catalyses GTP + H2O = GDP + phosphate + H(+). Regulated by guanine nucleotide exchange factors (GEFs) including C9orf72-SMCR8 complex, which promote the exchange of bound GDP for free GTP. Regulated by GTPase activating proteins (GAPs) which increase the GTP hydrolysis activity. Inhibited by GDP dissociation inhibitors (GDIs). In terms of biological role, the small GTPases Rab are key regulators of intracellular membrane trafficking, from the formation of transport vesicles to their fusion with membranes. Rabs cycle between an inactive GDP-bound form and an active GTP-bound form that is able to recruit to membranes different sets of downstream effectors directly responsible for vesicle formation, movement, tethering and fusion. RAB39B is involved in autophagy and may function in autophagosome formation. Binds downstream effector PICK1 to ensure selectively GRIA2 exit from the endoplasmic reticulum to the Golgi and to regulate AMPAR composition at the post-synapses and thus synaptic transmission. May regulate the homeostasis of SNCA/alpha-synuclein. This Homo sapiens (Human) protein is Ras-related protein Rab-39B.